The primary structure comprises 191 residues: ECF RNA polymerase sigma-E factor (191 aa).

The binds RNAP core stretch occupies residues 1 to 153 (MSEQLTDQVL…MAITLRELDG (153 aa)). Positions 25–92 (LVVRYQHKVA…KNYLVAQGRR (68 aa)) are sigma-70 factor domain-2. Residues 48–61 (DVVQEAFIKAYRAL) carry the Polymerase core binding motif. A sigma-70 factor domain-4 region spans residues 129–180 (QIVFRTIESLPEDLRMAITLRELDGLSYEEIAAIMDCPVGTVRSRIFRAREA). The H-T-H motif DNA-binding region spans 156 to 175 (YEEIAAIMDCPVGTVRSRIF).

It belongs to the sigma-70 factor family. ECF subfamily. Interacts transiently with the RNAP catalytic core formed by RpoA, RpoB, RpoC and RpoZ (2 alpha, 1 beta, 1 beta' and 1 omega subunit) to form the RNAP holoenzyme that can initiate transcription. Interacts 1:1 with anti-sigma-E factor RseA which prevents binding to RNAP catalytic core.

The protein localises to the cytoplasm. ECF sigma-E is held in an inactive form by its cognate anti-sigma factor (RseA) until released by regulated intramembrane proteolysis (RIP). RIP occurs when an extracytoplasmic signal (periplasmic stress and excess LPS) triggers a concerted proteolytic cascade to transmit information and elicit cellular responses. The anti-sigma factor RseA is an inner membrane protein, binding sigma-E in the cytoplasm and RseB in the periplasm. RseA is first cut extracytoplasmically (site-1 protease, S1P, by DegS), then within the membrane itself (site-2 protease, S2P, by RseP), while cytoplasmic proteases (predominantly ClpX-ClpP) finish degrading the regulatory protein, liberating sigma-E. Degradation of RseA requires 2 signals to activate DegS; an outer membrane protein (OMP) signal activates DegS, while an LPS signal causes release of RseB from RseA, freeing RseA to be cleaved. In terms of biological role, sigma factors are initiation factors that promote the attachment of RNA polymerase (RNAP) to specific initiation sites and are then released. Extracytoplasmic function (ECF) sigma-E controls the envelope stress response, responding to periplasmic protein stress, increased levels of periplasmic lipopolysaccharide (LPS) as well as heat shock and oxidative stress; it controls protein processing in the extracytoplasmic compartment. This Escherichia coli O157:H7 protein is ECF RNA polymerase sigma-E factor (rpoE).